Consider the following 143-residue polypeptide: Ribosome-binding factor A (143 aa).

The segment covering 119–129 (AVGDKPAVPRD) has biased composition (basic and acidic residues). The interval 119–143 (AVGDKPAVPRDDNDDPVSDNPERDA) is disordered.

The protein belongs to the RbfA family. Monomer. Binds 30S ribosomal subunits, but not 50S ribosomal subunits or 70S ribosomes.

The protein localises to the cytoplasm. One of several proteins that assist in the late maturation steps of the functional core of the 30S ribosomal subunit. Associates with free 30S ribosomal subunits (but not with 30S subunits that are part of 70S ribosomes or polysomes). Required for efficient processing of 16S rRNA. May interact with the 5'-terminal helix region of 16S rRNA. The polypeptide is Ribosome-binding factor A (Marinobacter nauticus (strain ATCC 700491 / DSM 11845 / VT8) (Marinobacter aquaeolei)).